A 1886-amino-acid chain; its full sequence is Nuclear pore membrane glycoprotein 210 (1886 aa).

The first 25 residues, 1 to 25 (MARASLIQPGLWALLLLQAVGPAVA), serve as a signal peptide directing secretion. Over 26 to 1805 (AKLNIPKVLL…GASLLSHFLD (1780 aa)) the chain is Perinuclear space. 4 N-linked (GlcNAc...) asparagine glycosylation sites follow: N337, N484, N681, and N1039. The 74-residue stretch at 1078-1151 (FPPFRLIPRK…VQAVDAETGK (74 aa)) folds into the BIG2 domain. Residues 1806-1828 (SYQVMFFTFFALLAGTAVTIIAY) form a helical membrane-spanning segment. The Cytoplasmic portion of the chain corresponds to 1829-1886 (HTVCAPRELASPLALTPHASPQHSPHYLASSPTAFNTLPSDRKASPPSGLWSPAYASH). A Phosphoserine modification is found at S1839. T1844 carries the post-translational modification Phosphothreonine. A disordered region spans residues 1866–1886 (LPSDRKASPPSGLWSPAYASH). Phosphoserine is present on residues S1873, S1876, S1880, and S1885.

This sequence belongs to the NUP210 family. As to quaternary structure, forms dimers and possibly higher-order oligomers. N-glycosylated, but not all potential glycosylation sites may be used. Contains high-mannose type oligosaccharides. In terms of processing, phosphorylated at Ser-1880 in mitosis specifically; not phosphorylated in interphase.

Its subcellular location is the nucleus. The protein resides in the nuclear pore complex. The protein localises to the nucleus membrane. It localises to the endoplasmic reticulum membrane. Its function is as follows. Nucleoporin essential for nuclear pore assembly and fusion, nuclear pore spacing, as well as structural integrity. The sequence is that of Nuclear pore membrane glycoprotein 210 (Nup210) from Rattus norvegicus (Rat).